We begin with the raw amino-acid sequence, 71 residues long: Keratin-associated protein 6-1 (71 aa).

This sequence belongs to the KRTAP type 6 family. In terms of assembly, interacts with hair keratins.

In the hair cortex, hair keratin intermediate filaments are embedded in an interfilamentous matrix, consisting of hair keratin-associated proteins (KRTAP), which are essential for the formation of a rigid and resistant hair shaft through their extensive disulfide bond cross-linking with abundant cysteine residues of hair keratins. The matrix proteins include the high-sulfur and high-glycine-tyrosine keratins. This Homo sapiens (Human) protein is Keratin-associated protein 6-1 (KRTAP6-1).